The sequence spans 243 residues: Venom nerve growth factor 1 (243 aa).

Residues 1–18 (MSMLCYTLIIAFLIGIWA) form the signal peptide. The propeptide occupies 19 to 125 (VPKSEDNAPL…ALNRNIRAKR (107 aa)). 3 disulfides stabilise this stretch: Cys139–Cys204, Cys182–Cys232, and Cys192–Cys234. Asn148 is a glycosylation site (N-linked (GlcNAc...) asparagine).

Belongs to the NGF-beta family. As to quaternary structure, homodimer; non-covalently linked. As to expression, expressed by the venom gland.

It is found in the secreted. Functionally, nerve growth factor is important for the development and maintenance of the sympathetic and sensory nervous systems. It stimulates division and differentiation of sympathetic and embryonic sensory neurons as well as basal forebrain cholinergic neurons in the brain. Its relevance in the snake venom is not clear. However, it has been shown to inhibit metalloproteinase-dependent proteolysis of platelet glycoprotein Ib alpha, suggesting a metalloproteinase inhibition to prevent metalloprotease autodigestion and/or protection against prey proteases. Binds a lipid between the two protein chains in the homodimer. The lipid-bound form promotes histamine relase from mouse mast cells, contrary to the lipid-free form. The polypeptide is Venom nerve growth factor 1 (Naja sputatrix (Malayan spitting cobra)).